The primary structure comprises 669 residues: Thrombospondin-type laminin G domain and EAR repeat-containing protein (669 aa).

The signal sequence occupies residues 1-19 (MSALLSLCFVLPLAAPGHG). A Laminin G-like domain is found at 58-277 (GLQLSVAAPR…RVTLGPQPPC (220 aa)). 7 EAR repeats span residues 313–358 (DYVE…KWTE), 360–408 (KFVS…KWSH), 412–460 (KFTP…KWNP), 464–506 (LFEA…VHSH), 514–570 (SFQL…ELNV), 574–622 (AFVK…RWQG), and 625–668 (GFVA…RLRT). N320 is a glycosylation site (N-linked (GlcNAc...) asparagine). N-linked (GlcNAc...) asparagine glycosylation is found at N468, N497, N556, and N569.

The protein localises to the secreted. It is found in the cell surface. It localises to the cell projection. The protein resides in the stereocilium. In terms of biological role, plays a critical role in tooth and hair follicle morphogenesis through regulation of the Notch signaling pathway. May play a role in development or function of the auditory system. The polypeptide is Thrombospondin-type laminin G domain and EAR repeat-containing protein (TSPEAR) (Homo sapiens (Human)).